Here is a 225-residue protein sequence, read N- to C-terminus: Heptaprenylglyceryl phosphate synthase (225 aa).

Residue Lys6 coordinates sn-glycerol 1-phosphate. Mg(2+) is bound by residues Asp8 and Thr34. Sn-glycerol 1-phosphate is bound by residues 153–158 (YIEYSG), Gly183, and 203–204 (GN).

This sequence belongs to the GGGP/HepGP synthase family. Group I subfamily. Homodimer. It depends on Mg(2+) as a cofactor.

The catalysed reaction is sn-glycerol 1-phosphate + all-trans-heptaprenyl diphosphate = 3-heptaprenyl-sn-glycero-1-phosphate + diphosphate. It participates in membrane lipid metabolism; glycerophospholipid metabolism. Its function is as follows. Prenyltransferase that catalyzes in vivo the transfer of the heptaprenyl moiety of heptaprenyl pyrophosphate (HepPP; 35 carbon atoms) to the C3 hydroxyl of sn-glycerol-1-phosphate (G1P), producing heptaprenylglyceryl phosphate (HepGP). This reaction is an ether-bond-formation step in the biosynthesis of archaea-type G1P-based membrane lipids found in Bacillales. This Listeria welshimeri serovar 6b (strain ATCC 35897 / DSM 20650 / CCUG 15529 / CIP 8149 / NCTC 11857 / SLCC 5334 / V8) protein is Heptaprenylglyceryl phosphate synthase.